Here is a 3411-residue protein sequence, read N- to C-terminus: Genome polyprotein (3411 aa).

The Cytoplasmic segment spans residues 1–104; sequence MSGRKAQGKT…LSSRKRRSHD (104 aa). Positions 38–72 are hydrophobic; homodimerization of capsid protein C; sequence PGPSRGVQGFISFFSFNILTGKKITAHLKRLWKML. Residues 102 to 121 constitute a propeptide, ER anchor for the capsid protein C, removed in mature form by serine protease NS3; that stretch reads SHDVLTVQFLILGMLLMAGG. Residues 105-125 form a helical membrane-spanning segment; it reads VLTVQFLILGMLLMAGGVTLV. At 126–244 the chain is on the extracellular side; it reads RKNRWLLLNV…GERQLQKIER (119 aa). N-linked (GlcNAc...) asparagine; by host glycosylation is found at Asn134 and Asn150. A helical membrane pass occupies residues 245–265; it reads WLVRNPFFAVTALAIAYLVGS. The Cytoplasmic segment spans residues 266-270; sequence NMTQR. A helical membrane pass occupies residues 271-285; that stretch reads VVIALLVLAVGPAYS. At 286–730 the chain is on the extracellular side; that stretch reads AHCIGITDRD…TVFGSAFQGL (445 aa). 8 disulfides stabilise this stretch: Cys288-Cys315, Cys345-Cys401, Cys345-Cys406, Cys359-Cys390, Cys377-Cys401, Cys377-Cys406, Cys467-Cys568, and Cys585-Cys615. Residues 383–396 are fusion peptide; sequence DRGWGNGCGLFGKG. Residues 731 to 751 form a helical membrane-spanning segment; that stretch reads FGGLSWITKVIMGAVLIWVGI. Over 752–757 the chain is Extracellular; that stretch reads NTRNMT. Residues 758 to 778 form a helical membrane-spanning segment; it reads MSMSMILVGVIMMFLSLGVGA. At 779 to 1132 the chain is on the extracellular side; the sequence is DQGCAINFGK…LVRSWVTAGE (354 aa). 6 cysteine pairs are disulfide-bonded: Cys782-Cys793, Cys833-Cys921, Cys957-Cys1002, Cys1058-Cys1107, Cys1069-Cys1091, and Cys1090-Cys1094. Residues Asn908 and Asn986 are each glycosylated (N-linked (GlcNAc...) asparagine; by host). The helical transmembrane segment at 1133–1153 threads the bilayer; it reads IHAVPFGLVSMMIAMEVVLRK. The Cytoplasmic portion of the chain corresponds to 1154-1201; the sequence is RQGPKQMLVGGMVLLGAMLVGQVTLLDLLKLTMAVGLHFHEMNNGGDA. A helical membrane pass occupies residues 1202 to 1222; that stretch reads MYMALIAAFSIRPGLLIGFGL. Residues 1223 to 1287 are Lumenal-facing; that stretch reads RTLWSPRERL…ILPLMALLTP (65 aa). A helical membrane pass occupies residues 1288–1308; the sequence is VTMAEVRLATMLLCAVVIIGV. The Cytoplasmic portion of the chain corresponds to 1309–1355; the sequence is LHQNSKDTSMQKTIPLVALTLTSYLGLTQPFLGLCAFLATRIFGRRS. A helical membrane pass occupies residues 1356–1376; it reads IPVNEALAAAGLVGVLAGLAF. Topologically, residues 1377 to 1378 are lumenal; sequence QE. Residues 1379 to 1399 traverse the membrane as a helical segment; sequence MENFLGPIAVGGILMMLVSVA. The Cytoplasmic segment spans residues 1400-1456; sequence GRVDGLELKKLGEVSWEEEAEISGSSARYDVALSEQGEFKLLSEEKVPWDQVVMTSL. Residues 1407–1446 are interacts with and activates NS3 protease; it reads LKKLGEVSWEEEAEISGSSARYDVALSEQGEFKLLSEEKV. The segment at residues 1457 to 1477 is an intramembrane region (helical); sequence ALVGAAIHPSALLLVLAGWLF. Residues 1478–2157 lie on the Cytoplasmic side of the membrane; the sequence is HVKGARRSGD…RNALSMMPEA (680 aa). The Peptidase S7 domain occupies 1485–1665; the sequence is SGDVLWDIPT…EVKEEGKEEL (181 aa). Active-site charge relay system; for serine protease NS3 activity residues include His1537, Asp1561, and Ser1622. The region spanning 1669–1825 is the Helicase ATP-binding domain; it reads PTMLKKGMTT…HSNGEIEDVQ (157 aa). The tract at residues 1673–1676 is important for RNA-binding; sequence KKGM. 1682–1689 is an ATP binding site; the sequence is YHPGAGKT. Positions 1773 to 1776 match the DEAH box motif; it reads DEAH. The Helicase C-terminal domain maps to 1820–1997; sequence EIEDVQTDIP…VRGGMVAPLY (178 aa). The residue at position 1877 (Lys1877) is an N6-acetyllysine; by host. A helical transmembrane segment spans residues 2158–2178; it reads MTIVMLFILAGLLTSGMVIFF. Topologically, residues 2179–2186 are lumenal; sequence MSPKGISR. Positions 2187 to 2207 form an intramembrane region, helical; that stretch reads MSMAMGTMAGCGYLMFLGGAK. Topologically, residues 2208-2209 are lumenal; it reads PT. A helical membrane pass occupies residues 2210–2230; that stretch reads HISYIMLIFFVLMVVVIPEPG. Topologically, residues 2231 to 2241 are cytoplasmic; the sequence is QQRSIQDNQVA. Residues 2242-2262 form a helical membrane-spanning segment; sequence YLIIGILTLVSVVAANELGML. Residues 2263–2293 lie on the Lumenal side of the membrane; sequence ERTKEDLFGKKNLIPSSASPWSWPDLDLKPG. An intramembrane region (helical) is located at residues 2294–2314; sequence AAWTVYVGIVTILSPMLHHWI. Over 2315 to 2360 the chain is Lumenal; it reads KVEYGNLSLSGIAQSASVLSFMDKGIPFMKMNISVIILLVSGWNSI. The helical transmembrane segment at 2361 to 2380 threads the bilayer; that stretch reads TVMPLLCGIGCAMLHWTLIL. Residues 2381-2421 lie on the Cytoplasmic side of the membrane; that stretch reads PGIKAQQSKLPQRRVFHGVAKNPVVDGNPTVDIEEAPEMPA. The chain crosses the membrane as a helical span at residues 2422–2442; sequence LYEKKLALYLLLALSLASVAM. Topologically, residues 2443 to 2445 are lumenal; that stretch reads CRT. The chain crosses the membrane as a helical span at residues 2446 to 2466; the sequence is PFSLAEGIVLASAALGPLIEG. Residues 2467 to 3411 lie on the Cytoplasmic side of the membrane; sequence NTSLLWNGPM…DADLQPGELI (945 aa). Residues 2507–2771 form the mRNA cap 0-1 NS5-type MT domain; it reads GRANGKTLGE…DVILPIGTRS (265 aa). Position 2562 (Ser2562) interacts with S-adenosyl-L-methionine. Ser2562 carries the post-translational modification Phosphoserine. Lys2567 (for 2'-O-MTase activity) is an active-site residue. Positions 2592, 2593, 2610, 2611, 2637, and 2638 each coordinate S-adenosyl-L-methionine. Asp2652 (for 2'-O-MTase activity) is an active-site residue. Ile2653 is a binding site for S-adenosyl-L-methionine. Residues Lys2688 and Glu2724 each act as for 2'-O-MTase activity in the active site. Tyr2726 is a binding site for S-adenosyl-L-methionine. Residues 2878–2911 carry the Nuclear localization signal motif; the sequence is RKIMKVVNRWLFRHLAREKNPRLCTKEEFIAKVR. Zn(2+) contacts are provided by Glu2945, His2949, Cys2954, and Cys2957. Residues 3035–3187 enclose the RdRp catalytic domain; that stretch reads GGFYADDTAG…RPIDDRFGMA (153 aa). 3 residues coordinate Zn(2+): His3222, Cys3238, and Cys3357.

The protein in the N-terminal section; belongs to the class I-like SAM-binding methyltransferase superfamily. mRNA cap 0-1 NS5-type methyltransferase family. In terms of assembly, homodimer. Interacts (via N-terminus) with host EXOC1 (via C-terminus); this interaction results in EXOC1 degradation through the proteasome degradation pathway. As to quaternary structure, forms heterodimers with envelope protein E in the endoplasmic reticulum and Golgi. Homodimer; in the endoplasmic reticulum and Golgi. Interacts with protein prM. Interacts with non-structural protein 1. In terms of assembly, homodimer; Homohexamer when secreted. Interacts with envelope protein E. As to quaternary structure, interacts (via N-terminus) with serine protease NS3. Forms a heterodimer with serine protease NS3. May form homooligomers. In terms of assembly, forms a heterodimer with NS2B. Interacts with non-structural protein 2A (via N-terminus). Interacts with NS4B. Interacts with unphosphorylated RNA-directed RNA polymerase NS5; this interaction stimulates RNA-directed RNA polymerase NS5 guanylyltransferase activity. NS3 interacts with host PDCD6IP; this interaction contributes to virion release. As to quaternary structure, interacts with serine protease NS3. Homodimer. Interacts with host STAT2; this interaction prevents the establishment of cellular antiviral state. Interacts with serine protease NS3. Interacts with host TRIM23; this interaction leads to NS5 ubiquitination. Specific enzymatic cleavages in vivo yield mature proteins. The nascent capsid protein C contains a C-terminal hydrophobic domain that act as a signal sequence for translocation of prM into the lumen of the ER. Mature capsid protein C is cleaved at a site upstream of this hydrophobic domain by NS3. prM is cleaved in post-Golgi vesicles by a host furin, releasing the mature small envelope protein M, and peptide pr. Non-structural protein 2A-alpha, a C-terminally truncated form of non-structural protein 2A, results from partial cleavage by NS3. Specific enzymatic cleavages in vivo yield mature proteins peptide 2K acts as a signal sequence and is removed from the N-terminus of NS4B by the host signal peptidase in the ER lumen. Signal cleavage at the 2K-4B site requires a prior NS3 protease-mediated cleavage at the 4A-2K site. In terms of processing, cleaved in post-Golgi vesicles by a host furin, releasing the mature small envelope protein M, and peptide pr. This cleavage is incomplete as up to 30% of viral particles still carry uncleaved prM. Post-translationally, N-glycosylated. N-glycosylated. The excreted form is glycosylated and this is required for efficient secretion of the protein from infected cells. In terms of processing, polyubiquitinated; ubiquitination is probably mediated by host TRIM23 and is prerequisite for NS5-STAT2 interaction. NS5 is not ISGylated or sumoylated. Post-translationally, acetylated by host KAT5. Acetylation modulates NS3 RNA-binding and unwinding activities and plays an important positive role for viral replication. Phosphorylated on serines residues. This phosphorylation may trigger NS5 nuclear localization.

It localises to the virion. Its subcellular location is the host nucleus. It is found in the host cytoplasm. The protein localises to the host perinuclear region. The protein resides in the secreted. It localises to the virion membrane. Its subcellular location is the host endoplasmic reticulum membrane. It carries out the reaction Selective hydrolysis of -Xaa-Xaa-|-Yaa- bonds in which each of the Xaa can be either Arg or Lys and Yaa can be either Ser or Ala.. It catalyses the reaction RNA(n) + a ribonucleoside 5'-triphosphate = RNA(n+1) + diphosphate. The enzyme catalyses a ribonucleoside 5'-triphosphate + H2O = a ribonucleoside 5'-diphosphate + phosphate + H(+). The catalysed reaction is ATP + H2O = ADP + phosphate + H(+). It carries out the reaction a 5'-end (5'-triphosphoguanosine)-ribonucleoside in mRNA + S-adenosyl-L-methionine = a 5'-end (N(7)-methyl 5'-triphosphoguanosine)-ribonucleoside in mRNA + S-adenosyl-L-homocysteine. It catalyses the reaction a 5'-end (N(7)-methyl 5'-triphosphoguanosine)-ribonucleoside in mRNA + S-adenosyl-L-methionine = a 5'-end (N(7)-methyl 5'-triphosphoguanosine)-(2'-O-methyl-ribonucleoside) in mRNA + S-adenosyl-L-homocysteine + H(+). Its function is as follows. Plays a role in virus budding by binding to the cell membrane and gathering the viral RNA into a nucleocapsid that forms the core of a mature virus particle. During virus entry, may induce genome penetration into the host cytoplasm after hemifusion induced by the surface proteins. Can migrate to the cell nucleus where it modulates host functions. In terms of biological role, inhibits RNA silencing by interfering with host Dicer. Functionally, prevents premature fusion activity of envelope proteins in trans-Golgi by binding to envelope protein E at pH6.0. After virion release in extracellular space, gets dissociated from E dimers. Acts as a chaperone for envelope protein E during intracellular virion assembly by masking and inactivating envelope protein E fusion peptide. prM is the only viral peptide matured by host furin in the trans-Golgi network probably to avoid catastrophic activation of the viral fusion activity in acidic Golgi compartment prior to virion release. prM-E cleavage is inefficient, and many virions are only partially matured. These uncleaved prM would play a role in immune evasion. Its function is as follows. May play a role in virus budding. Exerts cytotoxic effects by activating a mitochondrial apoptotic pathway through M ectodomain. May display a viroporin activity. In terms of biological role, binds to host cell surface receptor and mediates fusion between viral and cellular membranes. Envelope protein is synthesized in the endoplasmic reticulum in the form of heterodimer with protein prM. They play a role in virion budding in the ER, and the newly formed immature particle is covered with 60 spikes composed of heterodimer between precursor prM and envelope protein E. The virion is transported to the Golgi apparatus where the low pH causes dissociation of PrM-E heterodimers and formation of E homodimers. prM-E cleavage is inefficient, and many virions are only partially matured. These uncleaved prM would play a role in immune evasion. Functionally, involved in immune evasion, pathogenesis and viral replication. Once cleaved off the polyprotein, is targeted to three destinations: the viral replication cycle, the plasma membrane and the extracellular compartment. Essential for viral replication. Required for formation of the replication complex and recruitment of other non-structural proteins to the ER-derived membrane structures. Excreted as a hexameric lipoparticle that plays a role against host immune response. Antagonizing the complement function. Binds to the host macrophages and dendritic cells. Inhibits signal transduction originating from Toll-like receptor 3 (TLR3). Component of the viral RNA replication complex that functions in virion assembly and antagonizes the host immune response. Its function is as follows. Required cofactor for the serine protease function of NS3. May have membrane-destabilizing activity and form viroporins. In terms of biological role, displays three enzymatic activities: serine protease, NTPase and RNA helicase. NS3 serine protease, in association with NS2B, performs its autocleavage and cleaves the polyprotein at dibasic sites in the cytoplasm: C-prM, NS2A-NS2B, NS2B-NS3, NS3-NS4A, NS4A-2K and NS4B-NS5. NS3 RNA helicase binds RNA and unwinds dsRNA in the 3' to 5' direction. Also plays a role in virus assembly. Functionally, regulates the ATPase activity of the NS3 helicase activity. NS4A allows NS3 helicase to conserve energy during unwinding. Functions as a signal peptide for NS4B and is required for the interferon antagonism activity of the latter. Its function is as follows. Induces the formation of ER-derived membrane vesicles where the viral replication takes place. Inhibits interferon (IFN)-induced host STAT1 phosphorylation and nuclear translocation, thereby preventing the establishment of cellular antiviral state by blocking the IFN-alpha/beta pathway. In terms of biological role, replicates the viral (+) and (-) RNA genome, and performs the capping of genomes in the cytoplasm. NS5 methylates viral RNA cap at guanine N-7 and ribose 2'-O positions. Besides its role in RNA genome replication, also prevents the establishment of cellular antiviral state by blocking the interferon-alpha/beta (IFN-alpha/beta) signaling pathway. IFN-I induces binding of NS5 to host IFN-activated transcription factor STAT2, preventing its transcriptional activity. Host TRIM23 is the E3 ligase that interacts with and polyubiquitinates NS5 to promote its binding to STAT2 and trigger IFN-I signaling inhibition. This chain is Genome polyprotein, found in Yellow fever virus (isolate Ivory Coast/85-82H/1982) (YFV).